Here is a 465-residue protein sequence, read N- to C-terminus: WASH complex subunit 1 (465 aa).

Residues 1–54 (MTPVRMQHSLAGQTYAVPFIQPDLRREEAVQQMADALQYLQKVSGDIFSRISQQ) are required for WASH complex assembly. The interval 1 to 167 (MTPVRMQHSL…EGLGGLPSNI (167 aa)) is WHD1. Residue lysine 220 forms a Glycyl lysine isopeptide (Lys-Gly) (interchain with G-Cter in ubiquitin) linkage. Disordered stretches follow at residues 297 to 359 (QDGV…VDPS), 376 to 407 (GKAK…QGGH), and 423 to 465 (ISGK…DWES). The segment covering 302–314 (TPPPPPPPPPPAP) has biased composition (pro residues). The segment at 349 to 465 (QGAPREVVDP…AEEDEDDWES (117 aa)) is VCA. The region spanning 361–383 (GWATLLESIRQAGGIGKAKLRSM) is the WH2 domain. Residues 382–398 (SMKERKLEKQQQKEQEQ) are compositionally biased toward basic and acidic residues. Gly residues predominate over residues 424–436 (SGKGPGAGEGPGG). Over residues 456-465 (AEEDEDDWES) the composition is skewed to acidic residues.

It belongs to the WASH1 family. Component of the WASH core complex also described as WASH regulatory complex (SHRC) composed of WASH (WASHC1, WASH2P or WASH3P), WASHC2 (WASHC2A or WASHC2C), WASHC3, WASHC4 and WASHC5. The WASH core complex associates via WASHC2 with the F-actin-capping protein dimer (formed by CAPZA1, CAPZA2 or CAPZA3 and CAPZB) in a transient or substoichiometric manner which was initially described as WASH complex. Interacts (via WHD1 region) with WASHC2C; the interaction is direct. Interacts with VPS35; mediates the association with the retromer CSC complex. Interacts with FKBP15. Interacts with alpha-tubulin. Interacts with BECN1; this interaction can be competed out by AMBRA1 binding. Interacts with BLOC1S2; may associate with the BLOC-1 complex. Interacts with tubulin gamma chain (TUBG1 or TUBG2). Interacts with EXOC1, EXOC4, EXOC8; in MMP14-positive endosomes in breast tumor cells; indicative for an association with the exocyst complex. Interacts with TBC1D23. Ubiquitinated at Lys-220 via 'Lys-63'-linked ubiquitin chains by the TRIM27:MAGEL2 E3 ubiquitin ligase complex, leading to promote endosomal F-actin assembly.

Its subcellular location is the early endosome membrane. It localises to the recycling endosome membrane. The protein localises to the late endosome. It is found in the cytoplasmic vesicle. The protein resides in the autophagosome. Its subcellular location is the cytoplasm. It localises to the cytoskeleton. The protein localises to the microtubule organizing center. It is found in the centrosome. The protein resides in the centriole. Acts as a component of the WASH core complex that functions as a nucleation-promoting factor (NPF) at the surface of endosomes, where it recruits and activates the Arp2/3 complex to induce actin polymerization, playing a key role in the fission of tubules that serve as transport intermediates during endosome sorting. Involved in endocytic trafficking of EGF. Involved in transferrin receptor recycling. Regulates the trafficking of endosomal alpha5beta1 integrin to the plasma membrane and involved in invasive cell migration. In T-cells involved in endosome-to-membrane recycling of receptors including T-cell receptor (TCR), CD28 and ITGAL; proposed to be implicated in T cell proliferation and effector function. In dendritic cells involved in endosome-to-membrane recycling of major histocompatibility complex (MHC) class II probably involving retromer and subsequently allowing antigen sampling, loading and presentation during T-cell activation. Involved in Arp2/3 complex-dependent actin assembly driving Salmonella typhimurium invasion independent of ruffling. Involved in the exocytosis of MMP14 leading to matrix remodeling during invasive migration and implicating late endosome-to-plasma membrane tubular connections and cooperation with the exocyst complex. Involved in negative regulation of autophagy independently from its role in endosomal sorting by inhibiting BECN1 ubiquitination to inactivate PIK3C3/Vps34 activity. In Homo sapiens (Human), this protein is WASH complex subunit 1.